A 99-amino-acid chain; its full sequence is Late cornified envelope protein 4A (99 aa).

Residues 78-99 form a disordered region; sequence CYGSGSGQQSGGSGCCSGGGCC. Over residues 81 to 99 the composition is skewed to gly residues; the sequence is SGSGQQSGGSGCCSGGGCC.

The protein belongs to the LCE family. In terms of assembly, interacts with CYSRT1; the interaction is direct. Skin-specific. Expression was readily detected in adult trunk skin, adult arm skin, fetal skin, penal skin, vulva, esophagus and tongue. Not expressed in the cervix, rectum, lung, colon, or placenta.

Precursors of the cornified envelope of the stratum corneum. The protein is Late cornified envelope protein 4A (LCE4A) of Homo sapiens (Human).